The following is a 296-amino-acid chain: Factor associated with metabolism and energy (296 aa).

Gly-2 is lipidated: N-myristoyl glycine. 2 stretches are compositionally biased toward basic and acidic residues: residues 173–187 (SLHG…SPRD) and 267–281 (EQGK…LVRT). 2 disordered regions span residues 173 to 204 (SLHG…DDHD) and 256 to 281 (LLWD…LVRT).

The protein localises to the cell membrane. It is found in the cytoplasmic vesicle. May be involved in tuning the metabolism, energy expenditure, and excretion processes. This Homo sapiens (Human) protein is Factor associated with metabolism and energy.